We begin with the raw amino-acid sequence, 343 residues long: Fructose-1,6-bisphosphatase class 1 (343 aa).

4 residues coordinate Mg(2+): E90, D109, L111, and D112. Substrate is bound by residues 112 to 115 and N199; that span reads DGSS. E271 contacts Mg(2+).

The protein belongs to the FBPase class 1 family. Homotetramer. It depends on Mg(2+) as a cofactor.

Its subcellular location is the cytoplasm. The enzyme catalyses beta-D-fructose 1,6-bisphosphate + H2O = beta-D-fructose 6-phosphate + phosphate. It functions in the pathway carbohydrate biosynthesis; Calvin cycle. This is Fructose-1,6-bisphosphatase class 1 from Rhodopseudomonas palustris (strain ATCC BAA-98 / CGA009).